The following is a 572-amino-acid chain: Transmembrane glycoprotein NMB (572 aa).

A signal peptide spans 1 to 22 (MESLCGVLVFLLLAAGLPLQAA). The Extracellular segment spans residues 23-500 (KRFRDVLGHE…DLGSPLRTVN (478 aa)). 9 N-linked (GlcNAc...) asparagine glycosylation sites follow: Asn93, Asn134, Asn200, Asn249, Asn275, Asn296, Asn300, Asn306, and Asn312. In terms of domain architecture, PKD spans 251 to 338 (SDETFLRDLP…SPSSSTSPSP (88 aa)). Residues 321-359 (GPCPSPTPSPSSSTSPSPASSPSPTLSTPSPSLMPTGHK) form a disordered region. A compositionally biased stretch (low complexity) spans 330–356 (PSSSTSPSPASSPSPTLSTPSPSLMPT). N-linked (GlcNAc...) asparagine glycans are attached at residues Asn461 and Asn469. A helical membrane pass occupies residues 501–521 (GVLISIGCLAMFVTMVTILLY). Over 522–572 (KKHKTYKPIGNCTRNVVKGKGLSVFLSHAKAPFSRGDREKDPLLQDKPWML) the chain is Cytoplasmic. At Ser544 the chain carries Phosphoserine. The Cell attachment site motif lies at 556–558 (RGD).

It belongs to the PMEL/NMB family.

Its subcellular location is the cell membrane. It localises to the melanosome membrane. It is found in the early endosome membrane. Functionally, could be a melanogenic enzyme. This is Transmembrane glycoprotein NMB (Gpnmb) from Rattus norvegicus (Rat).